The sequence spans 142 residues: Transcriptional regulator MraZ (142 aa).

SpoVT-AbrB domains lie at 5-51 (ASAL…PRPE) and 77-120 (AADV…DAAT).

This sequence belongs to the MraZ family. As to quaternary structure, forms oligomers.

The protein localises to the cytoplasm. It is found in the nucleoid. This is Transcriptional regulator MraZ from Cupriavidus taiwanensis (strain DSM 17343 / BCRC 17206 / CCUG 44338 / CIP 107171 / LMG 19424 / R1) (Ralstonia taiwanensis (strain LMG 19424)).